The chain runs to 1940 residues: Protein ORF1940 (1940 aa).

TPR repeat units follow at residues I119 to Y153, F155 to I186, R480 to G513, and G617 to S652. 2 disordered regions span residues P1160 to V1239 and K1519 to S1571. The span at Q1164–S1185 shows a compositional bias: low complexity. Residues L1186 to K1200 show a composition bias toward polar residues. Low complexity-rich tracts occupy residues V1201–L1235, P1521–P1539, and T1561–S1571. A TPR 5 repeat occupies K1691–N1724. Residues T1862–I1940 form a disordered region. The segment covering T1868–K1883 has biased composition (pro residues). Over residues T1884–T1894 the composition is skewed to low complexity. The span at P1895–P1912 shows a compositional bias: pro residues.

In Acidianus convivator (ATV), this protein is Protein ORF1940.